The chain runs to 527 residues: Amidophosphoribosyltransferase (527 aa).

Positions 1–30 are disordered; the sequence is MAVDSDYVTDRAAGSRQTVTGQQPEQDLNS. A propeptide spanning residues 1 to 34 is cleaved from the precursor; sequence MAVDSDYVTDRAAGSRQTVTGQQPEQDLNSPREE. Residues 15–29 show a composition bias toward polar residues; it reads SRQTVTGQQPEQDLN. Cysteine 35 acts as the Nucleophile in catalysis. In terms of domain architecture, Glutamine amidotransferase type-2 spans 35–261; that stretch reads CGVFGVWAPG…PGELLAIDAD (227 aa). Cysteine 276 serves as a coordination point for [4Fe-4S] cluster. Mg(2+)-binding residues include serine 323, aspartate 385, and aspartate 386. [4Fe-4S] cluster is bound by residues cysteine 422, cysteine 478, and cysteine 481.

This sequence in the C-terminal section; belongs to the purine/pyrimidine phosphoribosyltransferase family. Mg(2+) is required as a cofactor. [4Fe-4S] cluster serves as cofactor.

It carries out the reaction 5-phospho-beta-D-ribosylamine + L-glutamate + diphosphate = 5-phospho-alpha-D-ribose 1-diphosphate + L-glutamine + H2O. The protein operates within purine metabolism; IMP biosynthesis via de novo pathway; N(1)-(5-phospho-D-ribosyl)glycinamide from 5-phospho-alpha-D-ribose 1-diphosphate: step 1/2. Functionally, catalyzes the formation of phosphoribosylamine from phosphoribosylpyrophosphate (PRPP) and glutamine. The sequence is that of Amidophosphoribosyltransferase from Mycobacterium bovis (strain ATCC BAA-935 / AF2122/97).